The following is a 476-amino-acid chain: Aspartyl/glutamyl-tRNA(Asn/Gln) amidotransferase subunit B (476 aa).

The protein belongs to the GatB/GatE family. GatB subfamily. In terms of assembly, heterotrimer of A, B and C subunits.

It catalyses the reaction L-glutamyl-tRNA(Gln) + L-glutamine + ATP + H2O = L-glutaminyl-tRNA(Gln) + L-glutamate + ADP + phosphate + H(+). It carries out the reaction L-aspartyl-tRNA(Asn) + L-glutamine + ATP + H2O = L-asparaginyl-tRNA(Asn) + L-glutamate + ADP + phosphate + 2 H(+). Functionally, allows the formation of correctly charged Asn-tRNA(Asn) or Gln-tRNA(Gln) through the transamidation of misacylated Asp-tRNA(Asn) or Glu-tRNA(Gln) in organisms which lack either or both of asparaginyl-tRNA or glutaminyl-tRNA synthetases. The reaction takes place in the presence of glutamine and ATP through an activated phospho-Asp-tRNA(Asn) or phospho-Glu-tRNA(Gln). The chain is Aspartyl/glutamyl-tRNA(Asn/Gln) amidotransferase subunit B from Clostridium botulinum (strain 657 / Type Ba4).